The following is a 1912-amino-acid chain: Protein javelin (1912 aa).

Disordered stretches follow at residues 1-32 (MGNG…QHNY), 89-145 (GTGL…VGGA), 298-377 (RSRH…HRLS), 460-515 (QSRR…SLSE), 545-586 (TTRT…TLRQ), 764-920 (SYNQ…EAPV), 965-1010 (IQEN…GKPL), 1257-1297 (GINS…GGAA), 1486-1507 (EQQE…QYED), and 1881-1912 (YDPS…DDKM). Basic residues-rich tracts occupy residues 97-133 (QQLH…HPHA) and 299-313 (SRHK…KKPP). The segment covering 339–354 (ADDTQSQRSNSATCDS) has biased composition (polar residues). A compositionally biased stretch (low complexity) spans 355-374 (HQQQQQQQHQPQQQHQQQQH). Polar residues predominate over residues 489-498 (EHSQSSVFPE). Positions 499-512 (TTTSNSDDQTDSPS) are enriched in low complexity. Over residues 553-566 (SEEGEEEQTGEEVV) the composition is skewed to acidic residues. Over residues 568 to 586 (SLTTPTEPQTSDSESTLRQ) the composition is skewed to polar residues. 2 stretches are compositionally biased toward basic and acidic residues: residues 772 to 792 (QRKE…DSIR) and 802 to 869 (RQRE…RKEE). Acidic residues predominate over residues 890–904 (SQQEDTVADVEEEDN). The span at 965-979 (IQENKETSQRIEPKP) shows a compositional bias: basic and acidic residues. A compositionally biased stretch (low complexity) spans 981-990 (PKTNSNSSST). Acidic residues-rich tracts occupy residues 1494-1507 (LEEE…QYED) and 1903-1912 (ELYDSLDDKM).

Its subcellular location is the cytoplasm. The protein resides in the cytoskeleton. Its function is as follows. Important for normal assembly of actin bundles during bristle formation. The protein is Protein javelin of Drosophila melanogaster (Fruit fly).